Reading from the N-terminus, the 1077-residue chain is Insulin receptor substrate 2-B (1077 aa).

Residues M1–V66 form a disordered region. 2 consecutive short sequence motifs (YXXM motif) follow at residues Y33–M36 and Y147–M150. The PH domain occupies D65–N170. The IRS-type PTB domain occupies F195 to S299. 3 disordered regions span residues E342–R373, V428–Y464, and V476–T495. 2 stretches are compositionally biased toward polar residues: residues S350 to G364 and V428 to P444. The segment covering S445–G457 has biased composition (low complexity). Residues R477–T495 show a composition bias toward polar residues. A YXXM motif 3 motif is present at residues Y499–M502. A compositionally biased stretch (polar residues) spans K530–V544. Positions K530–V571 are disordered. 6 short sequence motifs (YXXM motif) span residues Y595–M598, Y608–M611, Y634–M637, Y666–M669, Y713–M716, and Y891–M894.

Post-translationally, phosphorylated by INSR.

Potentiates insulin signaling. This is Insulin receptor substrate 2-B (irs2-b) from Xenopus laevis (African clawed frog).